The following is a 964-amino-acid chain: Chaperone protein ClpB4, mitochondrial (964 aa).

A mitochondrion-targeting transit peptide spans M1 to T39. The region spanning V83 to D227 is the Clp R domain. 2 repeat regions span residues F88 to Q153 and L164 to D227. The interval L242–P490 is i. ATP is bound by residues G287–T294 and G690–T697. The tract at residues V616–S807 is II.

It belongs to the ClpA/ClpB family.

It is found in the mitochondrion. Functionally, molecular chaperone that does not seem to be involved in heat stress response or tolerance. The protein is Chaperone protein ClpB4, mitochondrial (CLPB4) of Arabidopsis thaliana (Mouse-ear cress).